The primary structure comprises 114 residues: Tyrosine-protein phosphatase 11 (114 aa).

One can recognise a Tyrosine-protein phosphatase domain in the interval 1-114 (WRMIWEHNTR…EAKHTGPTIV (114 aa)). Asp-81 contacts substrate.

Belongs to the protein-tyrosine phosphatase family.

The catalysed reaction is O-phospho-L-tyrosyl-[protein] + H2O = L-tyrosyl-[protein] + phosphate. In Styela plicata (Wrinkled sea squirt), this protein is Tyrosine-protein phosphatase 11 (STY-11).